Reading from the N-terminus, the 259-residue chain is Small ribosomal subunit protein mS23 (259 aa).

The span at 230–244 (RAASFTGSALPSSEE) shows a compositional bias: polar residues. Residues 230-259 (RAASFTGSALPSSEESAPVDEETEKVPQQV) form a disordered region.

Belongs to the mitochondrion-specific ribosomal protein mS23 family. Component of the mitochondrial small ribosomal subunit.

The protein localises to the mitochondrion. The protein is Small ribosomal subunit protein mS23 (rsm25) of Aspergillus terreus (strain NIH 2624 / FGSC A1156).